The primary structure comprises 103 residues: Co-chaperonin GroES (103 aa).

It belongs to the GroES chaperonin family. Heptamer of 7 subunits arranged in a ring. Interacts with the chaperonin GroEL.

Its subcellular location is the cytoplasm. Its function is as follows. Together with the chaperonin GroEL, plays an essential role in assisting protein folding. The GroEL-GroES system forms a nano-cage that allows encapsulation of the non-native substrate proteins and provides a physical environment optimized to promote and accelerate protein folding. GroES binds to the apical surface of the GroEL ring, thereby capping the opening of the GroEL channel. The polypeptide is Co-chaperonin GroES (Prochlorococcus marinus (strain MIT 9215)).